The chain runs to 366 residues: Pectinesterase A (366 aa).

Residues 1 to 24 form the signal peptide; the sequence is MLKTISGTLALSLIIAASVHQAQA. Substrate-binding residues include threonine 109 and glutamine 153. Aspartate 178 (proton donor) is an active-site residue. Cysteines 192 and 212 form a disulfide. Aspartate 199 serves as the catalytic Nucleophile. Substrate contacts are provided by arginine 219, asparagine 226, tyrosine 230, arginine 267, tryptophan 269, and threonine 272.

Belongs to the pectinesterase family. In terms of assembly, monomer.

It localises to the secreted. It catalyses the reaction [(1-&gt;4)-alpha-D-galacturonosyl methyl ester](n) + n H2O = [(1-&gt;4)-alpha-D-galacturonosyl](n) + n methanol + n H(+). Its pathway is glycan metabolism; pectin degradation; 2-dehydro-3-deoxy-D-gluconate from pectin: step 1/5. In terms of biological role, involved in maceration and soft-rotting of plant tissue. In Dickeya chrysanthemi (Pectobacterium chrysanthemi), this protein is Pectinesterase A (pemA).